We begin with the raw amino-acid sequence, 48 residues long: Large ribosomal subunit protein eL40 (48 aa).

Belongs to the eukaryotic ribosomal protein eL40 family.

This is Large ribosomal subunit protein eL40 from Methanoregula boonei (strain DSM 21154 / JCM 14090 / 6A8).